Consider the following 208-residue polypeptide: Large ribosomal subunit protein uL4 (208 aa).

Positions 47-58 (ARAARERSDVAR) are enriched in basic and acidic residues. A disordered region spans residues 47–84 (ARAARERSDVARTGKKFGRQKGGGTARHGDRRAPIFIG).

It belongs to the universal ribosomal protein uL4 family. In terms of assembly, part of the 50S ribosomal subunit.

One of the primary rRNA binding proteins, this protein initially binds near the 5'-end of the 23S rRNA. It is important during the early stages of 50S assembly. It makes multiple contacts with different domains of the 23S rRNA in the assembled 50S subunit and ribosome. In terms of biological role, forms part of the polypeptide exit tunnel. The chain is Large ribosomal subunit protein uL4 from Sphingopyxis alaskensis (strain DSM 13593 / LMG 18877 / RB2256) (Sphingomonas alaskensis).